Here is a 202-residue protein sequence, read N- to C-terminus: Prephenate decarboxylase (202 aa).

It belongs to the prephenate decarboxylase family.

The enzyme catalyses prephenate + H(+) = 3-[(4R)-4-hydroxycyclohexa-1,5-dien-1-yl]-2-oxopropanoate + CO2. Its function is as follows. In vivo, involved in the biosynthesis of 2-carboxy-6-hydroxyoctahydroindole (Choi) present in the nonribosomal glycopeptides aeruginoside 126A and B. AerD is an unusual prephenate decarboxylase that avoids the typical aromatization of the cyclohexadienol ring of prephenate. AerD catalyzes the protonation at C8 followed by decarboxylation to produce the dihydro-4-hydroxyphenylpyruvate regioisomer A258 (H2HPP A258)(3-(4-hydroxycyclohexa- 1,5-dienyl)-2-oxopropanoic acid), which is able to undergo a nonenzymatic isomerization to produce dihydro-4-hydroxyphenylpyruvate regioisomer A295 (H2HPP A295)(3-(4-hydroxycyclohex-2-enylidene)-2-oxopropanoic acid). This Planktothrix agardhii (strain NIVA-CYA 126/8) protein is Prephenate decarboxylase.